We begin with the raw amino-acid sequence, 311 residues long: Insulin-like growth factor-binding protein 2 (311 aa).

A signal peptide spans 1–36; that stretch reads MALGGVGRGGAARAAWPRLLLAALAPALALAGPALP. Residues 38 to 120 enclose the IGFBP N-terminal domain; it reads VLFRCPPCTA…VQGQGTCARP (83 aa). 6 cysteine pairs are disulfide-bonded: Cys42–Cys70, Cys45–Cys72, Cys53–Cys73, Cys61–Cys76, Cys84–Cys97, and Cys91–Cys117. 2 disordered regions span residues 112–168 and 188–210; these read QGQG…PLKT and GKVG…TGRT. The Thyroglobulin type-1 domain maps to 209 to 291; sequence RTPCQQELDQ…APTIRGDPEC (83 aa). Disulfide bonds link Cys212–Cys246, Cys257–Cys268, and Cys270–Cys291. A Cell attachment site motif is present at residues 286–288; sequence RGD.

In terms of assembly, binds IGF2 more than IGF1.

Its subcellular location is the secreted. Its function is as follows. Inhibits IGF-mediated growth and developmental rates. IGF-binding proteins prolong the half-life of the IGFs and have been shown to either inhibit or stimulate the growth promoting effects of the IGFs on cell culture. They alter the interaction of IGFs with their cell surface receptors. The protein is Insulin-like growth factor-binding protein 2 (IGFBP2) of Gallus gallus (Chicken).